Reading from the N-terminus, the 181-residue chain is MSNMVPVMDKKAFLRSFLKRHQLKRRECAWLLNYLMNDDTLMERVHFLNHSEGTPKALVISAQGIEQIPFSFRKKHHVTTDCEKAFHDIRLNQTEDIYIELHFQERLTCPQYLAVLEDNPYLPETQERAQAFERKAEALLQESVRLFQLKKLSEAIDEALDNGDKETFMELSEQLNRLRKS.

The protein belongs to the UPF0302 family.

The chain is UPF0302 protein ABC1905 from Shouchella clausii (strain KSM-K16) (Alkalihalobacillus clausii).